The sequence spans 267 residues: 2-keto-3-deoxy-L-rhamnonate aldolase (267 aa).

H49 serves as the catalytic Proton acceptor. Q151 is a substrate binding site. Residue E153 participates in Mg(2+) binding. Substrate-binding residues include A178 and D179. D179 serves as a coordination point for Mg(2+).

Belongs to the HpcH/HpaI aldolase family. KDR aldolase subfamily. In terms of assembly, homohexamer. Mg(2+) serves as cofactor.

It catalyses the reaction 2-dehydro-3-deoxy-L-rhamnonate = (S)-lactaldehyde + pyruvate. Its function is as follows. Catalyzes the reversible retro-aldol cleavage of 2-keto-3-deoxy-L-rhamnonate (KDR) to pyruvate and lactaldehyde. This chain is 2-keto-3-deoxy-L-rhamnonate aldolase, found in Salmonella gallinarum (strain 287/91 / NCTC 13346).